Reading from the N-terminus, the 382-residue chain is Histidinol-phosphate aminotransferase (382 aa).

Residues 1 to 28 (MTSAPRPRPTLDDLPLREDLRGKSPYGA) are disordered. Residues 9–22 (PTLDDLPLREDLRG) are compositionally biased toward basic and acidic residues. Lys-233 is subject to N6-(pyridoxal phosphate)lysine.

The protein belongs to the class-II pyridoxal-phosphate-dependent aminotransferase family. Histidinol-phosphate aminotransferase subfamily. Homodimer. Requires pyridoxal 5'-phosphate as cofactor.

The catalysed reaction is L-histidinol phosphate + 2-oxoglutarate = 3-(imidazol-4-yl)-2-oxopropyl phosphate + L-glutamate. It participates in amino-acid biosynthesis; L-histidine biosynthesis; L-histidine from 5-phospho-alpha-D-ribose 1-diphosphate: step 7/9. The chain is Histidinol-phosphate aminotransferase from Mycobacterium marinum (strain ATCC BAA-535 / M).